We begin with the raw amino-acid sequence, 92 residues long: Large ribosomal subunit protein bL28 (92 aa).

The segment at Met-1 to Ile-34 is disordered.

The protein belongs to the bacterial ribosomal protein bL28 family.

The sequence is that of Large ribosomal subunit protein bL28 from Borrelia turicatae (strain 91E135).